Here is a 1258-residue protein sequence, read N- to C-terminus: Trafficking protein particle complex subunit 10 (1258 aa).

At serine 707 the chain carries Phosphoserine. Disordered stretches follow at residues 888-913 (PASG…QRAG) and 1201-1222 (SSLR…GLPM). Positions 901-911 (ELHRKQKDSQR) are enriched in basic and acidic residues. Residues 1201 to 1214 (SSLRSRGSTHSTSS) are compositionally biased toward low complexity.

This sequence belongs to the TRAPPC10 family. As to quaternary structure, specific component of the multisubunit TRAPP II complex, which includes at least TRAPPC1, TRAPPC2, TRAPPC3, TRAPPC4, TRAPPC5, TRAPPC6A/B, TRAPPC9, TRAPPC10 and TRAPPC14. TRAPPC9, TRAPPC10 and TRAPPC14 are specific subunits of the TRAPP II complex. Interacts with TRAPPC14.

The protein resides in the golgi apparatus. It is found in the cis-Golgi network. In terms of biological role, specific subunit of the TRAPP (transport protein particle) II complex, a highly conserved vesicle tethering complex that functions in late Golgi trafficking as a membrane tether. This Mus musculus (Mouse) protein is Trafficking protein particle complex subunit 10 (Trappc10).